The sequence spans 69 residues: Neurotoxin Cex7 (69 aa).

Residue Ala-1 is a signal peptide. Positions 2–67 (REGYLVSKST…TYPIPGKSCG (66 aa)) constitute an LCN-type CS-alpha/beta domain. 4 cysteine pairs are disulfide-bonded: Cys-13–Cys-66, Cys-17–Cys-42, Cys-26–Cys-47, and Cys-30–Cys-49. The residue at position 66 (Cys-66) is a Cysteine amide. Residues 67–69 (GKK) constitute a propeptide that is removed on maturation.

The protein belongs to the long (4 C-C) scorpion toxin superfamily. Sodium channel inhibitor family. Beta subfamily. Expressed by the venom gland.

The protein resides in the secreted. Functionally, beta toxins bind voltage-independently at site-4 of sodium channels (Nav) and shift the voltage of activation toward more negative potentials thereby affecting sodium channel activation and promoting spontaneous and repetitive firing. This chain is Neurotoxin Cex7, found in Centruroides exilicauda (Bark scorpion).